The sequence spans 72 residues: Guanine nucleotide-binding protein subunit gamma (72 aa).

Positions 32-72 are disordered; the sequence is MVSVAPPKANPSVSSKTKQQQHFKPGKATKDKATTKCCTIS. Residue C68 is the site of S-palmitoyl cysteine attachment. C69 is modified (cysteine methyl ester). C69 is lipidated: S-farnesyl cysteine. Positions 70-72 are cleaved as a propeptide — removed in mature form; the sequence is TIS.

Belongs to the G protein gamma family. In terms of assembly, g proteins are composed of 3 units, alpha, beta and gamma. Binding of the beta-gamma subunit complex (git5-git11) to the alpha subunit (gpa2) facilitates interaction with GPCR git3.

The protein resides in the cell membrane. Gamma subunit of the heterotrimeric guanine nucleotide-binding protein (G protein) involved in glucose-induced cAMP signaling. The beta-gamma subunits (git5-git11) promote binding of the alpha subunit gpa2 to GPCR git3, which senses extracellular glucose, to activate cAMP-PKA signaling and repress sexual development and gluconeogenesis. In Schizosaccharomyces pombe (strain 972 / ATCC 24843) (Fission yeast), this protein is Guanine nucleotide-binding protein subunit gamma (git11).